Reading from the N-terminus, the 718-residue chain is U-box domain-containing protein 5 (718 aa).

Residues 218–292 (TLPEKFKCTL…SEWCAKNGLD (75 aa)) enclose the U-box domain. 3 ARM repeats span residues 493–532 (PHGP…NLSS), 534–571 (MEIC…NLCS), and 573–613 (EKGR…QLCV). The segment at 662-704 (KEEEEEVSSRPEGRTTASPTSQVVTPVTHPEPVKITPSPKKSG) is disordered. Over residues 676–686 (TTASPTSQVVT) the composition is skewed to polar residues.

It carries out the reaction S-ubiquitinyl-[E2 ubiquitin-conjugating enzyme]-L-cysteine + [acceptor protein]-L-lysine = [E2 ubiquitin-conjugating enzyme]-L-cysteine + N(6)-ubiquitinyl-[acceptor protein]-L-lysine.. Its pathway is protein modification; protein ubiquitination. Functionally, functions as an E3 ubiquitin ligase. The sequence is that of U-box domain-containing protein 5 (PUB5) from Arabidopsis thaliana (Mouse-ear cress).